The sequence spans 281 residues: NADPH-dependent 7-cyano-7-deazaguanine reductase (281 aa).

88–90 (IES) is a substrate binding site. 90–91 (SK) provides a ligand contact to NADPH. The active-site Thioimide intermediate is Cys-189. Asp-196 serves as the catalytic Proton donor. 228 to 229 (HE) is a substrate binding site. 257–258 (RG) is a binding site for NADPH.

This sequence belongs to the GTP cyclohydrolase I family. QueF type 2 subfamily. As to quaternary structure, homodimer.

It localises to the cytoplasm. The catalysed reaction is 7-aminomethyl-7-carbaguanine + 2 NADP(+) = 7-cyano-7-deazaguanine + 2 NADPH + 3 H(+). It functions in the pathway tRNA modification; tRNA-queuosine biosynthesis. Functionally, catalyzes the NADPH-dependent reduction of 7-cyano-7-deazaguanine (preQ0) to 7-aminomethyl-7-deazaguanine (preQ1). The sequence is that of NADPH-dependent 7-cyano-7-deazaguanine reductase from Yersinia pestis bv. Antiqua (strain Antiqua).